Here is a 53-residue protein sequence, read N- to C-terminus: Large ribosomal subunit protein eL24 (53 aa).

Zn(2+)-binding residues include Cys4, Cys7, Cys30, and Cys34. The C4-type zinc finger occupies 4 to 34; the sequence is CSFCNKEIEEGTGKMYVKKDGSIYFFCSSKC.

The protein belongs to the eukaryotic ribosomal protein eL24 family. As to quaternary structure, part of the 50S ribosomal subunit. Forms a cluster with proteins L3 and L14. It depends on Zn(2+) as a cofactor.

In terms of biological role, binds to the 23S rRNA. The chain is Large ribosomal subunit protein eL24 from Methanobrevibacter smithii (strain ATCC 35061 / DSM 861 / OCM 144 / PS).